A 208-amino-acid chain; its full sequence is Ribosomal RNA large subunit methyltransferase E (208 aa).

Residues Gly-62, Trp-64, Asp-82, Asp-98, and Asp-123 each contribute to the S-adenosyl-L-methionine site. Residue Lys-163 is the Proton acceptor of the active site.

Belongs to the class I-like SAM-binding methyltransferase superfamily. RNA methyltransferase RlmE family.

It is found in the cytoplasm. The catalysed reaction is uridine(2552) in 23S rRNA + S-adenosyl-L-methionine = 2'-O-methyluridine(2552) in 23S rRNA + S-adenosyl-L-homocysteine + H(+). Specifically methylates the uridine in position 2552 of 23S rRNA at the 2'-O position of the ribose in the fully assembled 50S ribosomal subunit. The protein is Ribosomal RNA large subunit methyltransferase E of Haemophilus ducreyi (strain 35000HP / ATCC 700724).